The sequence spans 402 residues: Pyridinium-3,5-bisthiocarboxylic acid mononucleotide nickel insertion protein (402 aa).

Belongs to the LarC family.

The enzyme catalyses Ni(II)-pyridinium-3,5-bisthiocarboxylate mononucleotide = pyridinium-3,5-bisthiocarboxylate mononucleotide + Ni(2+). Involved in the biosynthesis of a nickel-pincer cofactor ((SCS)Ni(II) pincer complex). Binds Ni(2+), and functions in nickel delivery to pyridinium-3,5-bisthiocarboxylic acid mononucleotide (P2TMN), to form the mature cofactor. Is thus probably required for the activation of nickel-pincer cofactor-dependent enzymes. The protein is Pyridinium-3,5-bisthiocarboxylic acid mononucleotide nickel insertion protein of Desulfitobacterium hafniense (strain Y51).